The chain runs to 165 residues: UPF0254 protein MmarC7_0182 (165 aa).

Belongs to the UPF0254 family.

This chain is UPF0254 protein MmarC7_0182, found in Methanococcus maripaludis (strain C7 / ATCC BAA-1331).